We begin with the raw amino-acid sequence, 724 residues long: Propionyl-CoA carboxylase alpha chain, mitochondrial (724 aa).

Residues 48–495 form the Biotin carboxylation domain; that stretch reads KFDKILIANR…TTKYLPEVYP (448 aa). ATP contacts are provided by residues Lys163, 195–256, Glu247, and Asn282; that span reads SRDI…PRHI. The ATP-grasp domain occupies 167–364; that stretch reads KKIATAARVS…IVQQMLRVSY (198 aa). Mg(2+)-binding residues include Glu322, Glu335, and Asn337. Mn(2+) is bound by residues Glu322, Glu335, and Asn337. The active site involves Arg339. Phe395 contributes to the biotin binding site. The Biotinyl-binding domain occupies 649–724; sequence KAKVDLSTVV…DEGEVLVELE (76 aa). The residue at position 690 (Lys690) is an N6-biotinyllysine.

As to quaternary structure, the holoenzyme is a dodecamer composed of 6 alpha subunits and 6 beta subunits. Interacts with sir-2.2 and sir-2.3. Biotin is required as a cofactor. Mg(2+) serves as cofactor. The cofactor is Mn(2+). In terms of processing, the biotin cofactor is covalently attached to the C-terminal biotinyl-binding domain and is required for the catalytic activity.

It is found in the mitochondrion matrix. The catalysed reaction is propanoyl-CoA + hydrogencarbonate + ATP = (S)-methylmalonyl-CoA + ADP + phosphate + H(+). It carries out the reaction butanoyl-CoA + hydrogencarbonate + ATP = (2S)-ethylmalonyl-CoA + ADP + phosphate + H(+). The protein operates within metabolic intermediate metabolism; propanoyl-CoA degradation; succinyl-CoA from propanoyl-CoA: step 1/3. This is one of the 2 subunits of the biotin-dependent propionyl-CoA carboxylase (PCC), a mitochondrial enzyme involved in the catabolism of odd chain fatty acids, branched-chain amino acids isoleucine, threonine, methionine, and valine and other metabolites. Propionyl-CoA carboxylase catalyzes the carboxylation of propionyl-CoA/propanoyl-CoA to D-methylmalonyl-CoA/(S)-methylmalonyl-CoA. Within the holoenzyme, the alpha subunit catalyzes the ATP-dependent carboxylation of the biotin carried by the biotin carboxyl carrier (BCC) domain, while the beta subunit then transfers the carboxyl group from carboxylated biotin to propionyl-CoA. Propionyl-CoA carboxylase also significantly acts on butyryl-CoA/butanoyl-CoA, which is converted to ethylmalonyl-CoA/(2S)-ethylmalonyl-CoA. Other alternative minor substrates include (2E)-butenoyl-CoA/crotonoyl-CoA. The protein is Propionyl-CoA carboxylase alpha chain, mitochondrial (pcca-1) of Caenorhabditis elegans.